A 128-amino-acid polypeptide reads, in one-letter code: CD59 glycoprotein (128 aa).

The first 25 residues, 1–25 (MGIQGGSVLFGLLLVLAVFCHSGHS), serve as a signal peptide directing secretion. Residues 26-108 (LQCYNCPNPT…QLENGGTSLS (83 aa)) form the UPAR/Ly6 domain. Cystine bridges form between C28–C51, C31–C38, and C44–C64. N-linked (GlcNAc...) asparagine glycosylation is present at N43. K66 carries N-linked (Glc) (glycation) lysine glycosylation. 2 disulfide bridges follow: C70-C88 and C89-C94. 2 O-linked (GalNAc...) threonine glycosylation sites follow: T76 and T77. A lipid anchor (GPI-anchor amidated asparagine) is attached at N102. Positions 103-128 (GGTSLSEKTVLLLVTPFLAAAWSLHP) are cleaved as a propeptide — removed in mature form.

In terms of assembly, interacts with T-cell surface antigen CD2. In terms of processing, N- and O-glycosylated. The N-glycosylation mainly consists of a family of biantennary complex-type structures with and without lactosamine extensions and outer arm fucose residues. Also significant amounts of triantennary complexes (22%). Variable sialylation also present in the Asn-43 oligosaccharide. The predominant O-glycans are mono-sialylated forms of the disaccharide, Gal-beta-1,3GalNAc, and their sites of attachment are probably on Thr-76 and Thr-77. The GPI-anchor of soluble urinary CD59 has no inositol-associated phospholipid, but is composed of seven different GPI-anchor variants of one or more monosaccharide units. Major variants contain sialic acid, mannose and glucosamine. Sialic acid linked to an N-acetylhexosamine-galactose arm is present in two variants. Glycated. Glycation is found in diabetic subjects, but only at minimal levels in nondiabetic subjects. Glycated CD59 lacks MAC-inhibitory function and confers to vascular complications of diabetes.

The protein resides in the cell membrane. It localises to the secreted. In terms of biological role, potent inhibitor of the complement membrane attack complex (MAC) action, which protects human cells from damage during complement activation. Acts by binding to the beta-haipins of C8 (C8A and C8B) components of the assembling MAC, forming an intermolecular beta-sheet that prevents incorporation of the multiple copies of C9 required for complete formation of the osmolytic pore. Its function is as follows. The soluble form from urine retains its specific complement binding activity, but exhibits greatly reduced ability to inhibit complement membrane attack complex (MAC) assembly on cell membranes. The sequence is that of CD59 glycoprotein from Homo sapiens (Human).